The primary structure comprises 289 residues: Glycine-rich RNA-binding protein 5, mitochondrial (289 aa).

A mitochondrion-targeting transit peptide spans 1–31 (MAFLSKVGRLFSQTSSHVTASSSMLQSIRCM). The RRM domain maps to 34–111 (SKIFVGGISY…RRIRVNYATE (78 aa)). A disordered region spans residues 219–289 (QGSSTNAGFD…TDDGDVAKRA (71 aa)). Residues 257 to 272 (GSDNQFGDAENGNTEN) are compositionally biased toward polar residues.

This sequence belongs to the GR-RBP family. Homodimer. Interacts with MORF8/RIP1 AND RBG3/ORRM3. Binds to RBG2/ORRM5.

It is found in the mitochondrion. Functionally, possibly has a role in RNA transcription or processing during stress. Binds RNAs and DNAs sequence with a preference to single-stranded nucleic acids. Displays strong affinity to poly(U) sequence. Involved in C-to-U editing of mitochondrial RNA. Functions as a major mitochondrial editing factor. Controls 44 percent of the mitochondrial editing sites. The polypeptide is Glycine-rich RNA-binding protein 5, mitochondrial (Arabidopsis thaliana (Mouse-ear cress)).